The sequence spans 184 residues: Cathelicidin-related peptide Pt_CRAMP1 (184 aa).

The N-terminal stretch at 1-22 (MEGFFWKTWLVVAAFAIGGTSS) is a signal peptide. The propeptide occupies 23 to 150 (LPHKPLTYEE…EDEKDQPRRV (128 aa)). Disulfide bonds link Cys81–Cys92 and Cys103–Cys120. Residues 125 to 144 (EDEEQNQEEEEEEEKEEDEK) are compositionally biased toward acidic residues. The segment at 125–147 (EDEEQNQEEEEEEEKEEDEKDQP) is disordered.

It belongs to the cathelicidin family. As to expression, expressed by the venom gland.

It localises to the secreted. The protein localises to the target cell membrane. Potent antimicrobial peptide against Gram-negative (MIC=2 ug/ml against E.coli ATCC 25922, MIC=8 ug/ml against P.aeruginosa) and Gram-positive bacteria (MIC=32 ug/ml against E.faecalis, MIC=32 ug/ml against S.aureus). Adopts an amphipathic alpha helical conformation, that may allow to partition into the target membrane. High hemolytic activities have been observed on mammalian cells. The protein is Cathelicidin-related peptide Pt_CRAMP1 of Pseudonaja textilis (Eastern brown snake).